A 607-amino-acid chain; its full sequence is Probable CoA ligase CCL8 (607 aa).

Residues 236–244 (TSGTTGKPK), 391–396 (ERYGMT), Asp474, 486–489 (ILGR), and Lys591 each bind ATP. The tract at residues 305–391 (SVRGIWQRWR…QTITGHRLLE (87 aa)) is SBD1. Residues 392–453 (RYGMTEFVMA…VRSPSLFKEY (62 aa)) are SBD2.

The protein belongs to the ATP-dependent AMP-binding enzyme family. In terms of tissue distribution, mostly expressed at low levels in glandular trichomes (lupulin glands) after flowering, and, to a lower extent, in stems, leaves, flowers and cones.

Its subcellular location is the cytoplasm. The protein resides in the cytosol. The protein is Probable CoA ligase CCL8 of Humulus lupulus (European hop).